The chain runs to 213 residues: MSDLGAYIHAVETASSASALREAVIQLAQQNSTAAIPTLIAVLGYNNPAAAQAAVEGLIALGDAVVEPLLAQLDGYNYGARAYGVRVLGSIGHPAALQVLLAAAQSDFAPSVRRAATKALGTLRWQLIPEETVREAQLKEALAVLQRNSKAADWAVRYAVGVALDYLHQQAAARGIREAVRSLLNHLSDRDPDIVVRSRCQLALQRDSLSMHT.

The protein belongs to the CpcE/RpcE/PecE family. CpcE and CpcF associate to form a lyase.

In terms of biological role, required for the chromophorylation of the CpcA gene product. This Thermosynechococcus vestitus (strain NIES-2133 / IAM M-273 / BP-1) protein is Phycocyanobilin lyase subunit beta (cpcF).